We begin with the raw amino-acid sequence, 273 residues long: MPMDYQTEKHRGFAFVEFEEVEDAMSAIDNMNESEIFGRTIRVNVARPVRIREGWSRPVWSDENWLKKYGSAPLEGRKLDEPDIVNPSDTSENVEDLSDEEMRTKKQKRNLPRVFFDIRIGNGDAGRIVMELRSDIVPRTAENFRALCTGERGFGYHNCCFHRVIPQFMCQGGDFVKGDGTGGKSIYGRKFDDENFQLRHEGFGVLSMANSGPNTNGSQFFICTTKCDWLDGKHVVFGRVVDGQNVVKKMESVGSKSGKVKEPVIISRCGELI.

One can recognise an RRM domain in the interval 1–48; the sequence is MPMDYQTEKHRGFAFVEFEEVEDAMSAIDNMNESEIFGRTIRVNVARP. The disordered stretch occupies residues 77–103; that stretch reads RKLDEPDIVNPSDTSENVEDLSDEEMR. The PPIase cyclophilin-type domain occupies 115-271; it reads FFDIRIGNGD…EPVIISRCGE (157 aa).

This sequence belongs to the cyclophilin-type PPIase family. PPIase E subfamily.

The protein localises to the cytoplasm. It catalyses the reaction [protein]-peptidylproline (omega=180) = [protein]-peptidylproline (omega=0). Binds cyclosporin A (CsA). CsA mediates some of its effects via an inhibitory action on PPIase. Functionally, PPIases accelerate the folding of proteins. It catalyzes the cis-trans isomerization of proline imidic peptide bonds in oligopeptides. This chain is Peptidyl-prolyl cis-trans isomerase E, found in Schistosoma mansoni (Blood fluke).